The sequence spans 264 residues: Non-homologous end-joining factor xrc4 (264 aa).

Residues 173 to 186 (RNNEDNEDNHHINY) are compositionally biased toward basic and acidic residues. The disordered stretch occupies residues 173-264 (RNNEDNEDNH…SHESSETVSE (92 aa)). The segment covering 200-209 (QEGVNSSAVS) has biased composition (polar residues). Residues 248-264 (DDSHRRSSHESSETVSE) show a composition bias toward basic and acidic residues.

Belongs to the XRCC4-XLF family. XRCC4 subfamily. In terms of assembly, interacts with lig4; the interaction is direct.

The protein localises to the nucleus. In terms of biological role, involved in double-strand break repair via non-homologous end joining (NHEJ); the repair of a double-strand break in DNA in which the two broken ends are rejoined with little or no sequence complementarity. This chain is Non-homologous end-joining factor xrc4, found in Schizosaccharomyces pombe (strain 972 / ATCC 24843) (Fission yeast).